A 273-amino-acid chain; its full sequence is Major prion protein homolog (273 aa).

A signal peptide spans 1–24 (MARLLTTCCLLALLLAACTDVALS). Residues 25–121 (KKGKGKPSGG…QKPWKPPKTN (97 aa)) are disordered. Repeat copies occupy residues 42–47 (RQPSYP), 48–53 (RQPGYP), 54–59 (HNPGYP), 60–65 (HNPGYP), 66–71 (HNPGYP), 72–77 (HNPGYP), 78–83 (HNPGYP), and 84–89 (QNPGYP). Residues 42–89 (RQPSYPRQPGYPHNPGYPHNPGYPHNPGYPHNPGYPHNPGYPQNPGYP) are 8 X 6 AA tandem repeats of [HR]-[NQ]-P-G-Y-P. Positions 51–94 (GYPHNPGYPHNPGYPHNPGYPHNPGYPHNPGYPQNPGYPHNPGY) are enriched in low complexity. The Cu(2+) site is built by H66, H72, and H78. Residues H90 and G93 each coordinate Cu(2+). Residues 101–111 (YNPSSGGSYHN) show a composition bias toward polar residues. C192 and C237 are joined by a disulfide. N194, N209, and N218 each carry an N-linked (GlcNAc...) asparagine glycan. S248 carries GPI-anchor amidated serine lipidation. Positions 249 to 273 (GIQLHPADTWLAVLLLLLTTLFAMH) are cleaved as a propeptide — removed in mature form.

It belongs to the prion family. As to quaternary structure, monomer and homodimer. Has a tendency to aggregate into amyloid fibrils containing a cross-beta spine, formed by a steric zipper of superposed beta-strands. Soluble oligomers may represent an intermediate stage on the path to fibril formation. Copper binding may promote oligomerization. As to expression, spinal cord and brain.

It localises to the cell membrane. In terms of biological role, its primary physiological function is unclear. Has cytoprotective activity against internal or environmental stresses. May play a role in neuronal development and synaptic plasticity. May be required for neuronal myelin sheath maintenance. May play a role in iron uptake and iron homeostasis. Soluble oligomers are toxic to cultured neuroblastoma cells and induce apoptosis (in vitro). Association with GPC1 (via its heparan sulfate chains) targets PRNP to lipid rafts. Also provides Cu(2+) or Zn(2+) for the ascorbate-mediated GPC1 deaminase degradation of its heparan sulfate side chains. This Gallus gallus (Chicken) protein is Major prion protein homolog (PRNP).